A 695-amino-acid polypeptide reads, in one-letter code: Protein EARLY FLOWERING 3 (695 aa).

Positions 1-11 are enriched in basic and acidic residues; that stretch reads MKRGKDEEKIL. 5 disordered regions span residues 1–33, 48–75, 136–159, 216–283, and 541–653; these read MKRG…APPR, RFGD…SQPC, RSQS…VAPS, EKSA…REYS, and CSSQ…QTTR. The span at 54–74 shows a compositional bias: polar residues; sequence TMNSRSNNTSTLVHPGPSSQP. Composition is skewed to basic and acidic residues over residues 216 to 226, 234 to 253, and 260 to 283; these read EKSASSHDRVN, QESR…KDTD, and LATE…REYS. The segment at 261 to 484 is interaction with ELF3; it reads ATENHSQEGH…VMSPSEGLIY (224 aa). Polar residues-rich tracts occupy residues 551 to 567 and 579 to 588; these read PNEQ…LQNT and APQQQQQPTK. Composition is skewed to low complexity over residues 598-616 and 636-653; these read QGST…GSKS and TMTT…QTTR.

In terms of assembly, interacts specifically with both Pr and Pfr forms of phytochrome B. Interacts with ELF4. May form a homodimer.

Its subcellular location is the nucleus. Its function is as follows. May be a transcription factor part of a circadian clock input pathway. Acts within a 'zeitnehmer' feedback loop and is involved in its own circadian regulation. Has no role in regulating circadian clock function in the dark. Part of a corepressor complex consisting of ELF4, ELF3, and LUX involved in the transcriptional regulation of APRR9. The activity of the protein may be decreased in long day conditions due to its interaction with phytochrome B (phyB). Can regulate the initiation of flowering independently of phyB. Also involved in responses to nematode parasitism, like the formation of the nematode feeding structure. In Arabidopsis thaliana (Mouse-ear cress), this protein is Protein EARLY FLOWERING 3 (ELF3).